A 352-amino-acid polypeptide reads, in one-letter code: Quinolinate synthase (352 aa).

2 residues coordinate iminosuccinate: histidine 48 and serine 69. Residue cysteine 114 participates in [4Fe-4S] cluster binding. Iminosuccinate contacts are provided by residues 140–142 (YAN) and serine 157. Cysteine 201 contributes to the [4Fe-4S] cluster binding site. Residues 227–229 (HPE) and threonine 244 each bind iminosuccinate. [4Fe-4S] cluster is bound at residue cysteine 298.

Belongs to the quinolinate synthase family. Type 1 subfamily. Requires [4Fe-4S] cluster as cofactor.

It is found in the cytoplasm. It catalyses the reaction iminosuccinate + dihydroxyacetone phosphate = quinolinate + phosphate + 2 H2O + H(+). It functions in the pathway cofactor biosynthesis; NAD(+) biosynthesis; quinolinate from iminoaspartate: step 1/1. In terms of biological role, catalyzes the condensation of iminoaspartate with dihydroxyacetone phosphate to form quinolinate. This is Quinolinate synthase from Ectopseudomonas mendocina (strain ymp) (Pseudomonas mendocina).